We begin with the raw amino-acid sequence, 810 residues long: Bifunctional aspartokinase/homoserine dehydrogenase 2 (810 aa).

The aspartokinase stretch occupies residues 2–252; the sequence is SVIAQAGAKG…VKDACLLPLL (251 aa). The segment at 253-463 is interface; it reads RLDEASELAR…RAEKRIGLVL (211 aa). The tract at residues 464 to 810 is homoserine dehydrogenase; the sequence is FGKGNIGSRW…SDINRLAQLL (347 aa). Residues asparagine 468 and isoleucine 469 each contribute to the NADP(+) site. The NAD(+) site is built by isoleucine 469 and valine 498. Isoleucine 469 serves as a coordination point for NADPH. 3 residues coordinate NADP(+): arginine 501, threonine 549, and lysine 573. Threonine 549 contacts NAD(+). NADPH is bound by residues threonine 549 and lysine 573. Na(+) is bound by residues valine 603, alanine 605, and leucine 607. NADP(+)-binding residues include glycine 658 and glutamate 661. Residues glutamate 661 and aspartate 672 each contribute to the L-homoserine site. Residue lysine 676 is the Proton donor of the active site. Glycine 791 serves as a coordination point for NADP(+). An NAD(+)-binding site is contributed by glycine 791. Glycine 791 provides a ligand contact to NADPH.

The protein in the N-terminal section; belongs to the aspartokinase family. In the C-terminal section; belongs to the homoserine dehydrogenase family. Homotetramer. A metal cation serves as cofactor.

The enzyme catalyses L-homoserine + NADP(+) = L-aspartate 4-semialdehyde + NADPH + H(+). It carries out the reaction L-homoserine + NAD(+) = L-aspartate 4-semialdehyde + NADH + H(+). It catalyses the reaction L-aspartate + ATP = 4-phospho-L-aspartate + ADP. It participates in amino-acid biosynthesis; L-lysine biosynthesis via DAP pathway; (S)-tetrahydrodipicolinate from L-aspartate: step 1/4. It functions in the pathway amino-acid biosynthesis; L-methionine biosynthesis via de novo pathway; L-homoserine from L-aspartate: step 1/3. The protein operates within amino-acid biosynthesis; L-methionine biosynthesis via de novo pathway; L-homoserine from L-aspartate: step 3/3. Its pathway is amino-acid biosynthesis; L-threonine biosynthesis; L-threonine from L-aspartate: step 1/5. It participates in amino-acid biosynthesis; L-threonine biosynthesis; L-threonine from L-aspartate: step 3/5. Functionally, bifunctional aspartate kinase and homoserine dehydrogenase that catalyzes the first and the third steps toward the synthesis of lysine, methionine and threonine from aspartate. The polypeptide is Bifunctional aspartokinase/homoserine dehydrogenase 2 (metL) (Escherichia coli (strain K12)).